The chain runs to 109 residues: Globin (109 aa).

The Globin domain maps to 3–109; that stretch reads PLTAAEVSSL…IFPIAGIHAL (107 aa).

This sequence belongs to the globin family. Monomer.

Oxygen binding protein. The sequence is that of Globin from Dicrocoelium dendriticum (Small liver fluke).